The sequence spans 350 residues: tRNA N6-adenosine threonylcarbamoyltransferase (350 aa).

Residues histidine 109 and histidine 113 each contribute to the Fe cation site. Substrate-binding positions include 136–140 (TVSGG), aspartate 169, glycine 182, aspartate 186, and asparagine 284. Aspartate 312 lines the Fe cation pocket.

This sequence belongs to the KAE1 / TsaD family. The cofactor is Fe(2+).

It is found in the cytoplasm. The catalysed reaction is L-threonylcarbamoyladenylate + adenosine(37) in tRNA = N(6)-L-threonylcarbamoyladenosine(37) in tRNA + AMP + H(+). Functionally, required for the formation of a threonylcarbamoyl group on adenosine at position 37 (t(6)A37) in tRNAs that read codons beginning with adenine. Is involved in the transfer of the threonylcarbamoyl moiety of threonylcarbamoyl-AMP (TC-AMP) to the N6 group of A37, together with TsaE and TsaB. TsaD likely plays a direct catalytic role in this reaction. This Pelodictyon phaeoclathratiforme (strain DSM 5477 / BU-1) protein is tRNA N6-adenosine threonylcarbamoyltransferase.